Reading from the N-terminus, the 204-residue chain is Transmembrane protein 186 (204 aa).

Over 1-69 (MLELLCRVSP…RLVAALSRLK (69 aa)) the chain is Mitochondrial matrix. A helical transmembrane segment spans residues 70-90 (VYQAVITAAGTPIVFALGSAG). The Mitochondrial intermembrane segment spans residues 91 to 95 (QLSTD). Residues 96–116 (ALAIYAAIGVTGLITLTLASY) form a helical membrane-spanning segment. Residues 117–204 (ASSNLVGFIY…RQLFEGLFGN (88 aa)) are Mitochondrial matrix-facing.

The protein belongs to the TMEM186 family. Associates with mitochondrial complex I assembly intermediates during its biogenesis.

Its subcellular location is the mitochondrion inner membrane. Its function is as follows. As part of the MCIA complex, required for efficient assembly of the mitochondrial complex I. The sequence is that of Transmembrane protein 186 from Drosophila melanogaster (Fruit fly).